The primary structure comprises 284 residues: Proton-translocating ferredoxin:NAD(+) oxidoreductase complex subunit B (284 aa).

The hydrophobic stretch occupies residues 1–26 (MNTVIMILVVMTIIGLIFGLVLAYVN). The 4Fe-4S domain maps to 32 to 92 (EVNPLVDLVE…AEQVAKLTGK (61 aa)). [4Fe-4S] cluster is bound by residues Cys49, Cys52, Cys57, Cys75, Cys138, Cys142, Cys148, Cys152, Cys172, Cys175, Cys178, Cys182, Cys217, Cys220, Cys223, Cys227, Cys246, Cys249, Cys254, and Cys258. 4 4Fe-4S ferredoxin-type domains span residues 133–162 (GGPK…MGSN), 163–192 (GLPI…FRPV), 206–237 (GGAV…VENN), and 239–269 (AVVD…IVSG).

It belongs to the 4Fe4S bacterial-type ferredoxin family. RnfB subfamily. The complex is composed of six subunits: RnfA, RnfB, RnfC, RnfD, RnfE and RnfG. It depends on [4Fe-4S] cluster as a cofactor.

The protein resides in the cell membrane. Part of a membrane-bound complex that couples electron transfer with translocation of ions across the membrane. Couples electron transfer from reduced ferredoxin to NAD(+) with translocation of H(+) out of the cell. Essential for energy conservation during autotrophic growth. Contributes to ATP synthesis during heterotrophic growth. This chain is Proton-translocating ferredoxin:NAD(+) oxidoreductase complex subunit B, found in Clostridium ljungdahlii (strain ATCC 55383 / DSM 13528 / PETC).